A 1053-amino-acid polypeptide reads, in one-letter code: Serine/threonine-protein phosphatase 6 regulatory ankyrin repeat subunit A (1053 aa).

ANK repeat units lie at residues glutamate 40 to alanine 69, lysine 73 to alanine 102, asparagine 106 to valine 135, alanine 139 to alanine 168, lysine 172 to cysteine 201, lysine 205 to glutamate 234, tyrosine 238 to glutamine 267, lysine 271 to methionine 301, aspartate 305 to cysteine 334, asparagine 338 to lysine 367, histidine 371 to threonine 400, phenylalanine 404 to lysine 433, phenylalanine 437 to aspartate 466, arginine 470 to isoleucine 500, glutamine 504 to methionine 534, alanine 549 to valine 578, serine 582 to valine 611, leucine 616 to alanine 645, asparagine 652 to alanine 681, tryptophan 685 to leucine 714, arginine 718 to alanine 747, histidine 755 to threonine 784, asparagine 787 to asparagine 817, lysine 822 to serine 851, threonine 855 to leucine 885, serine 889 to leucine 918, and alanine 925 to alanine 954. A phosphoserine mark is found at serine 1007 and serine 1011.

Protein phosphatase 6 (PP6) holoenzyme is proposed to be a heterotrimeric complex formed by the catalytic subunit, a SAPS domain-containing subunit (PP6R) and an ankyrin repeat-domain containing regulatory subunit (ARS). Interacts with PPP6C, PPP6R1 and PPP6R3. Interacts with PPP1C and HNRPK. Ubiquitinated by the ECS(RAB40C) complex leading to its degradation and decreased PP6 activity.

Its subcellular location is the nucleus. It is found in the nucleoplasm. The protein resides in the cytoplasm. It localises to the cytosol. The protein localises to the cell projection. Its subcellular location is the lamellipodium. Its function is as follows. Regulatory subunit of protein phosphatase 6 (PP6) that may be involved in the recognition of phosphoprotein substrates. Involved in the PP6-mediated dephosphorylation of NFKBIE opposing its degradation in response to TNF-alpha. Selectively inhibits the phosphatase activity of PPP1C. Targets PPP1C to modulate HNRPK phosphorylation. Involved in the PP6-mediated dephosphorylation of MOB1 and induced focal adhesion assembly during cell migration. This chain is Serine/threonine-protein phosphatase 6 regulatory ankyrin repeat subunit A, found in Homo sapiens (Human).